We begin with the raw amino-acid sequence, 355 residues long: 3-isopropylmalate dehydrogenase (355 aa).

Residues Arg-90, Arg-100, Arg-128, and Asp-222 each coordinate substrate. Positions 222, 246, and 250 each coordinate Mg(2+). An NAD(+)-binding site is contributed by 280-292; that stretch reads GSAPDIAGKGIAN.

Belongs to the isocitrate and isopropylmalate dehydrogenases family. LeuB type 1 subfamily. As to quaternary structure, homodimer. Mg(2+) serves as cofactor. It depends on Mn(2+) as a cofactor.

The protein resides in the cytoplasm. It catalyses the reaction (2R,3S)-3-isopropylmalate + NAD(+) = 4-methyl-2-oxopentanoate + CO2 + NADH. It participates in amino-acid biosynthesis; L-leucine biosynthesis; L-leucine from 3-methyl-2-oxobutanoate: step 3/4. Its function is as follows. Catalyzes the oxidation of 3-carboxy-2-hydroxy-4-methylpentanoate (3-isopropylmalate) to 3-carboxy-4-methyl-2-oxopentanoate. The product decarboxylates to 4-methyl-2 oxopentanoate. The chain is 3-isopropylmalate dehydrogenase from Burkholderia thailandensis (strain ATCC 700388 / DSM 13276 / CCUG 48851 / CIP 106301 / E264).